Consider the following 146-residue polypeptide: D-aminoacyl-tRNA deacylase (146 aa).

The Gly-cisPro motif, important for rejection of L-amino acids motif lies at glycine 137–proline 138.

Belongs to the DTD family. In terms of assembly, homodimer.

The protein localises to the cytoplasm. The catalysed reaction is glycyl-tRNA(Ala) + H2O = tRNA(Ala) + glycine + H(+). It carries out the reaction a D-aminoacyl-tRNA + H2O = a tRNA + a D-alpha-amino acid + H(+). Its function is as follows. An aminoacyl-tRNA editing enzyme that deacylates mischarged D-aminoacyl-tRNAs. Also deacylates mischarged glycyl-tRNA(Ala), protecting cells against glycine mischarging by AlaRS. Acts via tRNA-based rather than protein-based catalysis; rejects L-amino acids rather than detecting D-amino acids in the active site. By recycling D-aminoacyl-tRNA to D-amino acids and free tRNA molecules, this enzyme counteracts the toxicity associated with the formation of D-aminoacyl-tRNA entities in vivo and helps enforce protein L-homochirality. The polypeptide is D-aminoacyl-tRNA deacylase (Cellvibrio japonicus (strain Ueda107) (Pseudomonas fluorescens subsp. cellulosa)).